A 739-amino-acid polypeptide reads, in one-letter code: Nuclear pore complex protein NUP62 (739 aa).

19 consecutive repeat copies span residues 6–7, 17–18, 50–51, 52–53, 68–69, 70–71, 78–79, 80–81, 91–92, 93–94, 108–109, 110–111, 124–125, 141–142, 159–160, 174–175, 186–187, 207–208, and 221–222. A 26 X 2 AA repeats of F-G region spans residues 6-450; it reads FGQSNSVGGF…AATFSTTGFG (445 aa). Positions 18 to 67 are disordered; that stretch reads GSSSATNSSSASSTTSPLSFSFNQSSNPSSTGFGFGSSVSSTPASSTTPS. Residues 79 to 218 are compositionally biased toward low complexity; the sequence is GFGSSASSST…ASSSAATSTS (140 aa). Positions 79-245 are disordered; the sequence is GFGSSASSST…VASSAPGSSS (167 aa). Residues 232–245 are compositionally biased toward low complexity; the sequence is PSFSVASSAPGSSS. 5 tandem repeats follow at residues 248-249, 271-272, 280-281, 308-309, and 366-367. 3 disordered regions span residues 281–329, 341–366, and 399–418; these read GSSS…ASPF, TASSTTSSTTPSAPPQTASSSSSFSF, and TTTSSSTPAATSAPASSAPA. Repeat copies occupy residues 426-427 and 449-450. The tract at residues 471–533 is disordered; sequence KTSTPASSSQ…AVAPVAGSPK (63 aa). Over residues 472–519 the composition is skewed to low complexity; it reads TSTPASSSQPQTTSPAFSFSLPSSTSTTAPATSSATTTQTTLVVPSSS. A coiled-coil region spans residues 584–674; that stretch reads RLEIEVAKVV…IRSIIQSVNA (91 aa).

This sequence belongs to the nucleoporin NSP1/NUP62 family. In terms of assembly, part of the nuclear pore complex (NPC). The NPC has an eight-fold symmetrical structure comprising a central transport channel and two rings, the cytoplasmic and nuclear rings, to which eight filaments are attached. The cytoplasmic filaments have loose ends, while the nuclear filaments are joined in a distal ring, forming a nuclear basket. NPCs are highly dynamic in configuration and composition, and can be devided in 3 subcomplexes, the NUP62 subcomplex, the NUP107-160 subcomplex and the NUP93 subcomplex, containing approximately 30 different nucleoporin proteins. Interacts with NUP58 and the importin KPNB1.

The protein resides in the nucleus envelope. Its subcellular location is the nucleus. The protein localises to the nuclear pore complex. This chain is Nuclear pore complex protein NUP62, found in Arabidopsis thaliana (Mouse-ear cress).